The following is a 453-amino-acid chain: Putative ABC transporter ATP-binding protein MM_0462 (453 aa).

An ABC transporter domain is found at 4–239 (LETRSLKYSY…QELLKKVGLR (236 aa)). 37–44 (GQNGSGKS) provides a ligand contact to ATP.

It belongs to the ABC transporter superfamily.

It localises to the cell membrane. In terms of biological role, probably part of an ABC transporter complex. Responsible for energy coupling to the transport system. In Methanosarcina mazei (strain ATCC BAA-159 / DSM 3647 / Goe1 / Go1 / JCM 11833 / OCM 88) (Methanosarcina frisia), this protein is Putative ABC transporter ATP-binding protein MM_0462.